A 141-amino-acid chain; its full sequence is Hemoglobin subunit alpha-3 (141 aa).

S1 carries the post-translational modification N-acetylserine. One can recognise a Globin domain in the interval 1 to 141; that stretch reads SLSASEKAAV…VSAVLTSKYR (141 aa). Position 58 (H58) interacts with O2. Position 87 (H87) interacts with heme b.

Belongs to the globin family. Heterotetramer of two alpha chains and two beta chains. As to expression, red blood cells.

This is a tadpole (larval) alpha chain. The protein is Hemoglobin subunit alpha-3 of Aquarana catesbeiana (American bullfrog).